The following is a 508-amino-acid chain: Photosystem II CP47 reaction center protein (508 aa).

6 helical membrane passes run 21–36 (SVHI…WAGS), 101–115 (IVFS…IWHW), 140–156 (GIHL…FGAF), 203–218 (IAAG…FHLS), 237–252 (VLSS…AFVV), and 457–472 (SFAL…HGAR).

The protein belongs to the PsbB/PsbC family. PsbB subfamily. As to quaternary structure, PSII is composed of 1 copy each of membrane proteins PsbA, PsbB, PsbC, PsbD, PsbE, PsbF, PsbH, PsbI, PsbJ, PsbK, PsbL, PsbM, PsbT, PsbX, PsbY, PsbZ, Psb30/Ycf12, at least 3 peripheral proteins of the oxygen-evolving complex and a large number of cofactors. It forms dimeric complexes. Binds multiple chlorophylls. PSII binds additional chlorophylls, carotenoids and specific lipids. serves as cofactor.

It localises to the plastid. Its subcellular location is the chloroplast thylakoid membrane. In terms of biological role, one of the components of the core complex of photosystem II (PSII). It binds chlorophyll and helps catalyze the primary light-induced photochemical processes of PSII. PSII is a light-driven water:plastoquinone oxidoreductase, using light energy to abstract electrons from H(2)O, generating O(2) and a proton gradient subsequently used for ATP formation. This is Photosystem II CP47 reaction center protein from Aethionema grandiflorum (Persian stone-cress).